A 377-amino-acid chain; its full sequence is Pseudouridylate synthase RPUSD4, mitochondrial (377 aa).

The N-terminal 15 residues, 1-15, are a transit peptide targeting the mitochondrion; sequence MAAPRWSASGPWIRG. Positions 36–62 form a coiled coil; sequence AASTAINAQRLAEKLRAQKREQDTKKE. Residue Asp-153 is part of the active site.

Belongs to the pseudouridine synthase RluA family. Interacts with 16S mt-rRNA, mt-tRNA(Phe) and mt-tRNA(Met). Forms a regulatory protein-RNA complex, consisting of RCC1L, NGRN, RPUSD3, RPUSD4, TRUB2, FASTKD2 and 16S mt-rRNA.

The protein resides in the mitochondrion matrix. The protein localises to the nucleus. It localises to the cytoplasm. It carries out the reaction uridine in 5S rRNA = pseudouridine in 5S rRNA. The catalysed reaction is a uridine in tRNA = a pseudouridine in tRNA. The enzyme catalyses a uridine in mRNA = a pseudouridine in mRNA. Functionally, catalyzes uridine to pseudouridine isomerization (pseudouridylation) of different mitochondrial RNA substrates. Acts on position 1397 in 16S mitochondrial ribosomal RNA (16S mt-rRNA). This modification is required for the assembly of 16S mt-rRNA into a functional mitochondrial ribosome. As a component of a functional protein-RNA module, consisting of RCC1L, NGRN, RPUSD3, RPUSD4, TRUB2, FASTKD2 and 16S mt-rRNA, controls 16S mt-rRNA abundance and is required for intra-mitochondrial translation. Acts on position 39 in mitochondrial tRNA(Phe). Also catalyzes pseudouridylation of mRNAs in nucleus: acts as a regulator of pre-mRNA splicing by mediating pseudouridylation of pre-mRNAs at locations associated with alternatively spliced regions. Pseudouridylation of pre-mRNAs near splice sites directly regulates mRNA splicing and mRNA 3'-end processing. The sequence is that of Pseudouridylate synthase RPUSD4, mitochondrial from Homo sapiens (Human).